Consider the following 158-residue polypeptide: Dihydroneopterin triphosphate diphosphatase (158 aa).

Residues Lys14, Arg36, and Thr47 each coordinate substrate. The 140-residue stretch at 14–153 (KNNQSVLVVI…NNAEAIKKYL (140 aa)) folds into the Nudix hydrolase domain. The Nudix box signature appears at 48-69 (GTIESDETPKKTAIRELWEEVR). Mg(2+) contacts are provided by Glu63 and Glu67. 88–91 (FEIF) lines the substrate pocket. Glu124 is a Mg(2+) binding site. A substrate-binding site is contributed by Ser142.

This sequence belongs to the Nudix hydrolase family. Requires Mg(2+) as cofactor.

It catalyses the reaction 7,8-dihydroneopterin 3'-triphosphate + H2O = 7,8-dihydroneopterin 3'-phosphate + diphosphate + H(+). Its function is as follows. Catalyzes the hydrolysis of dihydroneopterin triphosphate to dihydroneopterin monophosphate and pyrophosphate. Required for efficient folate biosynthesis. Can also hydrolyze nucleoside triphosphates with a preference for dATP. This chain is Dihydroneopterin triphosphate diphosphatase (nudB), found in Haemophilus influenzae (strain ATCC 51907 / DSM 11121 / KW20 / Rd).